The sequence spans 288 residues: Bifunctional protein FolD (288 aa).

Residues 166–168 and isoleucine 232 contribute to the NADP(+) site; that span reads GAS.

This sequence belongs to the tetrahydrofolate dehydrogenase/cyclohydrolase family. In terms of assembly, homodimer.

The catalysed reaction is (6R)-5,10-methylene-5,6,7,8-tetrahydrofolate + NADP(+) = (6R)-5,10-methenyltetrahydrofolate + NADPH. It catalyses the reaction (6R)-5,10-methenyltetrahydrofolate + H2O = (6R)-10-formyltetrahydrofolate + H(+). It participates in one-carbon metabolism; tetrahydrofolate interconversion. Catalyzes the oxidation of 5,10-methylenetetrahydrofolate to 5,10-methenyltetrahydrofolate and then the hydrolysis of 5,10-methenyltetrahydrofolate to 10-formyltetrahydrofolate. The polypeptide is Bifunctional protein FolD (Salmonella heidelberg (strain SL476)).